The chain runs to 149 residues: Cytochrome c-type biogenesis protein CcmE (149 aa).

Topologically, residues 1 to 7 are cytoplasmic; the sequence is MTRKQKR. Residues 8–28 traverse the membrane as a helical; Signal-anchor for type II membrane protein segment; the sequence is LAVIAGGVGFIMVAVLLVLFA. The Periplasmic segment spans residues 29-149; sequence FGQSIAYFYM…GVWKGEGEAK (121 aa). Residues histidine 123 and tyrosine 127 each contribute to the heme site.

This sequence belongs to the CcmE/CycJ family.

It localises to the cell inner membrane. Its function is as follows. Heme chaperone required for the biogenesis of c-type cytochromes. Transiently binds heme delivered by CcmC and transfers the heme to apo-cytochromes in a process facilitated by CcmF and CcmH. The protein is Cytochrome c-type biogenesis protein CcmE of Allorhizobium ampelinum (strain ATCC BAA-846 / DSM 112012 / S4) (Agrobacterium vitis (strain S4)).